A 91-amino-acid polypeptide reads, in one-letter code: Small ribosomal subunit protein uS19 (91 aa).

This sequence belongs to the universal ribosomal protein uS19 family.

Protein S19 forms a complex with S13 that binds strongly to the 16S ribosomal RNA. In Bordetella pertussis (strain Tohama I / ATCC BAA-589 / NCTC 13251), this protein is Small ribosomal subunit protein uS19.